Here is a 396-residue protein sequence, read N- to C-terminus: NADH-quinone oxidoreductase subunit D (396 aa).

The protein belongs to the complex I 49 kDa subunit family. NDH-1 is composed of 14 different subunits. Subunits NuoB, C, D, E, F, and G constitute the peripheral sector of the complex.

The protein localises to the cell inner membrane. It catalyses the reaction a quinone + NADH + 5 H(+)(in) = a quinol + NAD(+) + 4 H(+)(out). Its function is as follows. NDH-1 shuttles electrons from NADH, via FMN and iron-sulfur (Fe-S) centers, to quinones in the respiratory chain. The immediate electron acceptor for the enzyme in this species is believed to be ubiquinone. Couples the redox reaction to proton translocation (for every two electrons transferred, four hydrogen ions are translocated across the cytoplasmic membrane), and thus conserves the redox energy in a proton gradient. The chain is NADH-quinone oxidoreductase subunit D from Rhizobium johnstonii (strain DSM 114642 / LMG 32736 / 3841) (Rhizobium leguminosarum bv. viciae).